A 367-amino-acid chain; its full sequence is Riboflavin biosynthesis protein VVA0006 (367 aa).

Position 215 to 219 (215 to 219 (RLHSE)) interacts with GTP. Zn(2+) is bound by residues C220, C231, and C233. Residues Q236, 258–260 (EGR), and T280 each bind GTP. D292 functions as the Proton acceptor in the catalytic mechanism. Residue R294 is the Nucleophile of the active site. GTP-binding residues include T315 and K320.

The protein in the N-terminal section; belongs to the YbiA family. It in the C-terminal section; belongs to the GTP cyclohydrolase II family. Requires Zn(2+) as cofactor.

It catalyses the reaction 2,5-diamino-6-hydroxy-4-(5-phosphoribosylamino)-pyrimidine + H2O = 2,5,6-triamino-4-hydroxypyrimidine + D-ribose 5-phosphate. It carries out the reaction 5-amino-6-(5-phospho-D-ribosylamino)uracil + H2O = 5,6-diaminouracil + D-ribose 5-phosphate. The catalysed reaction is GTP + 4 H2O = 2,5-diamino-6-hydroxy-4-(5-phosphoribosylamino)-pyrimidine + formate + 2 phosphate + 3 H(+). It participates in cofactor biosynthesis; riboflavin biosynthesis; 5-amino-6-(D-ribitylamino)uracil from GTP: step 1/4. Functionally, catalyzes the hydrolysis of the N-glycosidic bond in the first two intermediates of riboflavin biosynthesis, which are highly reactive metabolites, yielding relatively innocuous products. Thus, can divert a surplus of harmful intermediates into relatively harmless products and pre-empt the damage these intermediates would otherwise do. Has no activity against GTP, nucleoside monophosphates or ADP-ribose. Catalyzes the conversion of GTP to 2,5-diamino-6-ribosylamino-4(3H)-pyrimidinone 5'-phosphate (DARP), formate and pyrophosphate. The protein is Riboflavin biosynthesis protein VVA0006 of Vibrio vulnificus (strain YJ016).